Here is a 481-residue protein sequence, read N- to C-terminus: Trichosetin biosynthesis cluster MFS transporter (481 aa).

Residues 1–13 (MSTTPQMSQSGFQ) are compositionally biased toward polar residues. The segment at 1–63 (MSTTPQMSQS…DGPDDPQHPL (63 aa)) is disordered. Basic and acidic residues predominate over residues 20-31 (GAREDVGTEAQE). A glycan (N-linked (GlcNAc...) asparagine) is linked at Asn-64. Residues 72–92 (LHVGIVSLSTLAANLAATMFA) form a helical membrane-spanning segment. An N-linked (GlcNAc...) asparagine glycan is attached at Asn-103. 5 helical membrane-spanning segments follow: residues 111-131 (AMTV…LAPL), 147-167 (VYMA…FLVF), 169-189 (IIAG…VADL), 200-220 (ALFA…GGFV), and 228-248 (WTFR…FALM). Asn-252 is a glycosylation site (N-linked (GlcNAc...) asparagine). The next 5 membrane-spanning stretches (helical) occupy residues 302-322 (PIVL…FLLF), 353-373 (LLLM…YGWT), 380-400 (WIVP…VVIP), 403-423 (IYLV…ANLL), and 446-466 (GWGN…PWIF).

This sequence belongs to the major facilitator superfamily.

The protein localises to the cell membrane. Functionally, efflux pump required for efficient secretion of trichosetin or other secondary metabolies produced by the trichosetin gene cluster. Plays a crucial role in detoxification of the toxic trichosetin in Gibberella fujikuroi cells. The sequence is that of Trichosetin biosynthesis cluster MFS transporter from Gibberella fujikuroi (strain CBS 195.34 / IMI 58289 / NRRL A-6831) (Bakanae and foot rot disease fungus).